A 291-amino-acid chain; its full sequence is T-cell leukemia homeobox protein 3 (291 aa).

The segment at 1–51 (MEAPASAQTPHPHEPISFGIDQILNSPDQDSAPAPRGPDGASYLGGPPGGR) is disordered. A DNA-binding region (homeobox) is located at residues 166–225 (RKKPRTSFSRVQICELEKRFHRQKYLASAERAALAKSLKMTDAQVKTWFQNRRTKWRRQT).

The protein localises to the nucleus. This is T-cell leukemia homeobox protein 3 (Tlx3) from Mus musculus (Mouse).